Here is a 216-residue protein sequence, read N- to C-terminus: Probable nicotinate-nucleotide adenylyltransferase (216 aa).

This sequence belongs to the NadD family.

The catalysed reaction is nicotinate beta-D-ribonucleotide + ATP + H(+) = deamido-NAD(+) + diphosphate. The protein operates within cofactor biosynthesis; NAD(+) biosynthesis; deamido-NAD(+) from nicotinate D-ribonucleotide: step 1/1. Functionally, catalyzes the reversible adenylation of nicotinate mononucleotide (NaMN) to nicotinic acid adenine dinucleotide (NaAD). In Klebsiella pneumoniae subsp. pneumoniae (strain ATCC 700721 / MGH 78578), this protein is Probable nicotinate-nucleotide adenylyltransferase.